Reading from the N-terminus, the 117-residue chain is Large ribosomal subunit protein bL19 (117 aa).

This sequence belongs to the bacterial ribosomal protein bL19 family.

In terms of biological role, this protein is located at the 30S-50S ribosomal subunit interface and may play a role in the structure and function of the aminoacyl-tRNA binding site. This Aliivibrio fischeri (strain ATCC 700601 / ES114) (Vibrio fischeri) protein is Large ribosomal subunit protein bL19.